Consider the following 254-residue polypeptide: Nickel import ATP-binding protein NikD (254 aa).

An ABC transporter domain is found at 2–241 (PQQIELRNIA…PKHTVTRSLV (240 aa)). 36-43 (GGSGSGKS) is a binding site for ATP.

It belongs to the ABC transporter superfamily. Nickel importer (TC 3.A.1.5.3) family. In terms of assembly, the complex is composed of two ATP-binding proteins (NikD and NikE), two transmembrane proteins (NikB and NikC) and a solute-binding protein (NikA).

Its subcellular location is the cell inner membrane. The enzyme catalyses Ni(2+)(out) + ATP + H2O = Ni(2+)(in) + ADP + phosphate + H(+). In terms of biological role, part of the ABC transporter complex NikABCDE involved in nickel import. Responsible for energy coupling to the transport system. In Shigella boydii serotype 4 (strain Sb227), this protein is Nickel import ATP-binding protein NikD.